The sequence spans 398 residues: Minor cardiolipin synthase ClsB (398 aa).

A helical transmembrane segment spans residues 3-23; the sequence is VFIVIMIIVVIFFALILLDIF. 2 PLD phosphodiesterase domains span residues 141–168 and 311–338; these read MQKR…AEEY and YQGF…DKRS.

The protein belongs to the phospholipase D family. Cardiolipin synthase subfamily.

The protein resides in the cell membrane. Involved in the biosynthesis of cardiolipin. This is Minor cardiolipin synthase ClsB (clsB) from Bacillus subtilis (strain 168).